The following is a 410-amino-acid chain: Tryptophan synthase beta chain (410 aa).

Residue Lys-98 is modified to N6-(pyridoxal phosphate)lysine.

This sequence belongs to the TrpB family. In terms of assembly, tetramer of two alpha and two beta chains. The cofactor is pyridoxal 5'-phosphate.

The enzyme catalyses (1S,2R)-1-C-(indol-3-yl)glycerol 3-phosphate + L-serine = D-glyceraldehyde 3-phosphate + L-tryptophan + H2O. Its pathway is amino-acid biosynthesis; L-tryptophan biosynthesis; L-tryptophan from chorismate: step 5/5. In terms of biological role, the beta subunit is responsible for the synthesis of L-tryptophan from indole and L-serine. This is Tryptophan synthase beta chain from Roseobacter denitrificans (strain ATCC 33942 / OCh 114) (Erythrobacter sp. (strain OCh 114)).